A 261-amino-acid chain; its full sequence is Global transcriptional regulator CodY (261 aa).

The segment at 1–159 is GAF domain; it reads MPNLLEKTRK…ASTVVGIQLL (159 aa). A DNA-binding region (H-T-H motif) is located at residues 207–226; sequence ASVIADRIGITRSVIVNALR.

This sequence belongs to the CodY family.

It is found in the cytoplasm. DNA-binding global transcriptional regulator which is involved in the adaptive response to starvation and acts by directly or indirectly controlling the expression of numerous genes in response to nutrient availability. During rapid exponential growth, CodY is highly active and represses genes whose products allow adaptation to nutrient depletion. In Streptococcus agalactiae serotype III (strain NEM316), this protein is Global transcriptional regulator CodY.